The chain runs to 405 residues: Putative polysaccharide ligase RP358 (405 aa).

The next 10 membrane-spanning stretches (helical) occupy residues 23-43 (IAATVAFFLLSIIITGFISFI), 77-97 (LFTAWCFISCLFAVHPINSLV), 120-140 (VLYIKNSLILGIITAILLFFI), 156-178 (FGLYMLDRGCALLSITTWVAIII), 201-221 (ISDSLASFLGFSIGGIIFILA), 227-247 (IFFKLITISLITGSLLFPVIA), 270-290 (LFIWHFVANKIIIRPILGYGF), 322-342 (ILQITLELGILGLALFLCLVY), 353-375 (VSNFRAASYSCFINYYIIGMISY), and 377-397 (IWQTWWILSGIWILVLMKLLV).

The protein belongs to the O-antigen ligase family.

The protein localises to the membrane. This is Putative polysaccharide ligase RP358 from Rickettsia prowazekii (strain Madrid E).